Here is a 267-residue protein sequence, read N- to C-terminus: 3-methyl-2-oxobutanoate hydroxymethyltransferase (267 aa).

Residues D46 and D85 each contribute to the Mg(2+) site. Residues 46–47 (DS), D85, and K115 each bind 3-methyl-2-oxobutanoate. E117 provides a ligand contact to Mg(2+). The active-site Proton acceptor is the E184.

Belongs to the PanB family. Homodecamer; pentamer of dimers. Requires Mg(2+) as cofactor.

The protein localises to the cytoplasm. It carries out the reaction 3-methyl-2-oxobutanoate + (6R)-5,10-methylene-5,6,7,8-tetrahydrofolate + H2O = 2-dehydropantoate + (6S)-5,6,7,8-tetrahydrofolate. It functions in the pathway cofactor biosynthesis; (R)-pantothenate biosynthesis; (R)-pantoate from 3-methyl-2-oxobutanoate: step 1/2. Catalyzes the reversible reaction in which hydroxymethyl group from 5,10-methylenetetrahydrofolate is transferred onto alpha-ketoisovalerate to form ketopantoate. The protein is 3-methyl-2-oxobutanoate hydroxymethyltransferase of Geobacter metallireducens (strain ATCC 53774 / DSM 7210 / GS-15).